Consider the following 451-residue polypeptide: Flagellum-specific ATP synthase (451 aa).

175–182 (AGTGVGKS) contacts ATP.

It belongs to the ATPase alpha/beta chains family.

The protein localises to the cytoplasm. It catalyses the reaction ATP + H2O + 4 H(+)(in) = ADP + phosphate + 5 H(+)(out). In terms of biological role, probable catalytic subunit of a protein translocase for flagellum-specific export, or a proton translocase involved in local circuits at the flagellum. This Pseudomonas aeruginosa (strain ATCC 15692 / DSM 22644 / CIP 104116 / JCM 14847 / LMG 12228 / 1C / PRS 101 / PAO1) protein is Flagellum-specific ATP synthase (fliI).